The chain runs to 701 residues: Octapeptide-repeat antigen (701 aa).

N-linked (GlcNAc...) asparagine glycosylation is found at Asn40, Asn41, Asn76, Asn111, Asn127, Asn139, Asn181, Asn189, Asn311, Asn334, Asn344, Asn477, and Asn557. A disordered region spans residues 120–140 (IENEEKSNGSRKSSNKQKYNE). The segment at 641–701 (LSGSSTGSMN…IKSGSKDHIK (61 aa)) is disordered. Residues 642 to 655 (SGSSTGSMNNGKSG) show a composition bias toward low complexity. 6 repeat units span residues 653-660 (KSGSKSDI), 661-668 (KGGSKDDI), 669-676 (KSGSKDDI), 677-684 (KSGSKADI), 685-692 (KSGSKDDI), and 693-700 (KSGSKDHI). A 6 X 8 AA approximate tandem repeats region spans residues 653-700 (KSGSKSDIKGGSKDDIKSGSKDDIKSGSKADIKSGSKDDIKSGSKDHI). Residues 656-701 (SKSDIKGGSKDDIKSGSKDDIKSGSKADIKSGSKDDIKSGSKDHIK) show a composition bias toward basic and acidic residues.

This sequence belongs to the ATP-dependent AMP-binding enzyme family.

The protein resides in the parasitophorous vacuole. In Plasmodium falciparum (isolate NF7 / Ghana), this protein is Octapeptide-repeat antigen.